Consider the following 111-residue polypeptide: Large ribosomal subunit protein uL23 (111 aa).

Belongs to the universal ribosomal protein uL23 family. Part of the 50S ribosomal subunit. Contacts protein L29, and trigger factor when it is bound to the ribosome.

One of the early assembly proteins it binds 23S rRNA. One of the proteins that surrounds the polypeptide exit tunnel on the outside of the ribosome. Forms the main docking site for trigger factor binding to the ribosome. In Nitrosomonas eutropha (strain DSM 101675 / C91 / Nm57), this protein is Large ribosomal subunit protein uL23.